The following is a 424-amino-acid chain: Oleosin-B3 (424 aa).

The interval 1–37 is polar; that stretch reads MRNEIQNETAQTDQTQGSMFSFFNLFPFLLPMFEVIK. The next 3 helical transmembrane spans lie at 16 to 36, 38 to 58, and 69 to 89; these read QGSMFSFFNLFPFLLPMFEVI, MVVASVASVVYLGFAGVTLSG, and LFIIFSPILLPAIAATTVLAA. A hydrophobic region spans residues 38-119; sequence MVVASVASVV…GIPESIKPSN (82 aa). Repeat copies occupy residues 111-120, 121-130, 131-140, 141-150, 196-202, 203-209, 210-216, 217-223, 241-258, 259-276, 277-294, 301-318, 319-336, 337-354, 396-400, 401-405, 406-410, and 411-415. The tract at residues 111–150 is 4 X 10 AA tandem repeats of I-P-[EV]-S-I-K-P-S-N-[IV]; it reads IPESIKPSNVIPESIKPSNIIPESIKPSNIIPVSIKPSNI. Residues 164 to 424 are disordered; the sequence is KIKAKQEEKS…SSHGSGGKHI (261 aa). The span at 167–220 shows a compositional bias: basic and acidic residues; it reads AKQEEKSKGKSEDSSKGKGKSKGEDTTTDEDKHGKGESKHGKGESKHGKGESTH. The tract at residues 196-223 is 4 X 7 AA tandem repeats of E-[SD]-[KT]-H-G-K-G; the sequence is EDKHGKGESKHGKGESKHGKGESTHGKG. The segment at 241-354 is 6 X 18 AA tandem repeats of [KR]-H-[EG]-[SG]-G-G-[SA]-[PSA]-M-G-G-G-K-H-[GE]-S-[GV]-G; that stretch reads KHGSGGSPMG…MGGGKHGSGG (114 aa). The span at 242–255 shows a compositional bias: gly residues; that stretch reads HGSGGSPMGGGKHG. Over residues 288–304 the composition is skewed to basic and acidic residues; it reads GKHESVGKHGSGGKHES. The segment covering 341 to 355 has biased composition (gly residues); sequence GGSAMGGGKHGSGGK. The segment covering 391–416 has biased composition (low complexity); that stretch reads SSTSESSDGSSSDGSSSDGSSSDGSS. The interval 396–415 is 4 X 5 AA tandem repeats of S-S-D-G-S; it reads SSDGSSSDGSSSDGSSSDGS.

It belongs to the oleosin family. The full-length protein is found in the tapetal lipid bodies of immature anthers, the proteolytically cleaved C-terminal product is found on the coats of pollen grains. No expression is detected in other flower organs, siliques or seedlings.

It is found in the lipid droplet. Its subcellular location is the membrane. In terms of biological role, many of the major pollen coat proteins are derived from endoproteolytic cleavage of oleosin-like proteins. In Brassica napus (Rape), this protein is Oleosin-B3.